Here is a 104-residue protein sequence, read N- to C-terminus: DNA-directed RNA polymerase subunit omega (104 aa).

The protein belongs to the RNA polymerase subunit omega family. As to quaternary structure, the RNAP catalytic core consists of 2 alpha, 1 beta, 1 beta' and 1 omega subunit. When a sigma factor is associated with the core the holoenzyme is formed, which can initiate transcription.

It carries out the reaction RNA(n) + a ribonucleoside 5'-triphosphate = RNA(n+1) + diphosphate. Functionally, promotes RNA polymerase assembly. Latches the N- and C-terminal regions of the beta' subunit thereby facilitating its interaction with the beta and alpha subunits. The sequence is that of DNA-directed RNA polymerase subunit omega from Streptococcus thermophilus (strain CNRZ 1066).